Here is a 368-residue protein sequence, read N- to C-terminus: Transaldolase (368 aa).

Catalysis depends on K140, which acts as the Schiff-base intermediate with substrate.

It belongs to the transaldolase family. Type 2 subfamily.

It is found in the cytoplasm. It catalyses the reaction D-sedoheptulose 7-phosphate + D-glyceraldehyde 3-phosphate = D-erythrose 4-phosphate + beta-D-fructose 6-phosphate. Its pathway is carbohydrate degradation; pentose phosphate pathway; D-glyceraldehyde 3-phosphate and beta-D-fructose 6-phosphate from D-ribose 5-phosphate and D-xylulose 5-phosphate (non-oxidative stage): step 2/3. Transaldolase is important for the balance of metabolites in the pentose-phosphate pathway. This Thermobifida fusca (strain YX) protein is Transaldolase.